The primary structure comprises 281 residues: Eukaryotic translation initiation factor 3 subunit G (281 aa).

Residues 1-32 (MSRPAGRTDWAEEDDETELALPSQTVVKNKDG) form a disordered region. In terms of domain architecture, RRM spans 202 to 280 (ATLRVTNVSE…LILRVEFAKK (79 aa)).

It belongs to the eIF-3 subunit G family. In terms of assembly, component of the eukaryotic translation initiation factor 3 (eIF-3) complex.

The protein localises to the cytoplasm. Functionally, RNA-binding component of the eukaryotic translation initiation factor 3 (eIF-3) complex, which is involved in protein synthesis of a specialized repertoire of mRNAs and, together with other initiation factors, stimulates binding of mRNA and methionyl-tRNAi to the 40S ribosome. The eIF-3 complex specifically targets and initiates translation of a subset of mRNAs involved in cell proliferation. This subunit can bind 18S rRNA. This Phaeosphaeria nodorum (strain SN15 / ATCC MYA-4574 / FGSC 10173) (Glume blotch fungus) protein is Eukaryotic translation initiation factor 3 subunit G.